Here is a 332-residue protein sequence, read N- to C-terminus: GTP 3',8-cyclase (332 aa).

In terms of domain architecture, Radical SAM core spans 9 to 220 (RFARKVDYLR…DQVRERIAER (212 aa)). Position 18 (Arg-18) interacts with GTP. [4Fe-4S] cluster is bound by residues Cys-25 and Cys-29. Tyr-31 serves as a coordination point for S-adenosyl-L-methionine. Residue Cys-32 coordinates [4Fe-4S] cluster. Arg-67 provides a ligand contact to GTP. S-adenosyl-L-methionine is bound at residue Gly-71. Thr-98 is a GTP binding site. Ser-122 is a binding site for S-adenosyl-L-methionine. Lys-159 provides a ligand contact to GTP. Met-193 lines the S-adenosyl-L-methionine pocket. Residues Cys-258 and Cys-261 each coordinate [4Fe-4S] cluster. Position 263–265 (263–265 (RVR)) interacts with GTP. Cys-275 provides a ligand contact to [4Fe-4S] cluster.

Belongs to the radical SAM superfamily. MoaA family. Monomer and homodimer. It depends on [4Fe-4S] cluster as a cofactor.

The catalysed reaction is GTP + AH2 + S-adenosyl-L-methionine = (8S)-3',8-cyclo-7,8-dihydroguanosine 5'-triphosphate + 5'-deoxyadenosine + L-methionine + A + H(+). It participates in cofactor biosynthesis; molybdopterin biosynthesis. Functionally, catalyzes the cyclization of GTP to (8S)-3',8-cyclo-7,8-dihydroguanosine 5'-triphosphate. This chain is GTP 3',8-cyclase, found in Pseudomonas savastanoi pv. phaseolicola (strain 1448A / Race 6) (Pseudomonas syringae pv. phaseolicola (strain 1448A / Race 6)).